Here is a 176-residue protein sequence, read N- to C-terminus: UBA-like domain-containing protein 1 (176 aa).

Residues 87–176 (SESFHGGGGS…RAHPAMEAER (90 aa)) are disordered. Low complexity predominate over residues 120-137 (TPSWPTAASPPGGPQQHQ). The segment covering 138-150 (PQPPLWTPAPPSP) has biased composition (pro residues). Over residues 166-176 (PRAHPAMEAER) the composition is skewed to basic and acidic residues.

The protein belongs to the UBALD family.

The sequence is that of UBA-like domain-containing protein 1 (Ubald1) from Mus musculus (Mouse).